We begin with the raw amino-acid sequence, 313 residues long: Thiamine thiazole synthase (313 aa).

Substrate contacts are provided by residues alanine 71, glutamate 92–alanine 93, glycine 100, and valine 165. Cysteine 199 bears the 2,3-didehydroalanine (Cys) mark. Substrate is bound by residues aspartate 201, histidine 216, methionine 268, and arginine 278–glycine 280.

Belongs to the THI4 family. As to quaternary structure, homooctamer. Requires Fe cation as cofactor. Post-translationally, during the catalytic reaction, a sulfide is transferred from Cys-199 to a reaction intermediate, generating a dehydroalanine residue.

It localises to the cytoplasm. The protein resides in the nucleus. It catalyses the reaction [ADP-thiazole synthase]-L-cysteine + glycine + NAD(+) = [ADP-thiazole synthase]-dehydroalanine + ADP-5-ethyl-4-methylthiazole-2-carboxylate + nicotinamide + 3 H2O + 2 H(+). Involved in biosynthesis of the thiamine precursor thiazole. Catalyzes the conversion of NAD and glycine to adenosine diphosphate 5-(2-hydroxyethyl)-4-methylthiazole-2-carboxylic acid (ADT), an adenylated thiazole intermediate. The reaction includes an iron-dependent sulfide transfer from a conserved cysteine residue of the protein to a thiazole intermediate. The enzyme can only undergo a single turnover, which suggests it is a suicide enzyme. May have additional roles in adaptation to various stress conditions and in DNA damage tolerance. This Coprinopsis cinerea (strain Okayama-7 / 130 / ATCC MYA-4618 / FGSC 9003) (Inky cap fungus) protein is Thiamine thiazole synthase.